The primary structure comprises 815 residues: Probable oligoxyloglucan-reducing end-specific xyloglucanase (815 aa).

A signal peptide spans 1–19 (MKFWLQQLGLAVLCASSAA). D58 (nucleophile) is an active-site residue. N-linked (GlcNAc...) asparagine glycosylation occurs at N113. One copy of the BNR 1 repeat lies at 118-128 (FVSNDRGATFT). N-linked (GlcNAc...) asparagine glycosylation occurs at N180. The BNR 2 repeat unit spans residues 218-228 (YYTTDGGKNWE). 3 N-linked (GlcNAc...) asparagine glycosylation sites follow: N246, N290, and N304. The stretch at 351–361 (YLSRDGGKTWK) is one BNR 3 repeat. The N-linked (GlcNAc...) asparagine glycan is linked to N387. The active-site Proton donor is the D489. One copy of the BNR 4 repeat lies at 545-555 (YSTDGGSEWTK). N-linked (GlcNAc...) asparagine glycosylation is found at N564 and N603. The BNR 5 repeat unit spans residues 649–658 (YVSTDGGLSY). N-linked (GlcNAc...) asparagine glycosylation occurs at N662. BNR repeat units follow at residues 696–706 (YHTTDFGKRWK) and 749–759 (YRSDDNGSTWD). An N-linked (GlcNAc...) asparagine glycan is attached at N754.

Belongs to the glycosyl hydrolase 74 family.

It localises to the secreted. The catalysed reaction is Hydrolysis of cellobiose from the reducing end of xyloglucans consisting of a beta-(1-&gt;4)-linked glucan carrying alpha-D-xylosyl groups on O-6 of the glucose residues. To be a substrate, the first residue must be unsubstituted, the second residue may bear a xylosyl group, whether further glycosylated or not, and the third residue, which becomes the new terminus by the action of the enzyme, is preferably xylosylated, but this xylose residue must not be further substituted.. Its function is as follows. Oligoxyloglucan-reducing end-specific xyloglucanase involved in degradation of xyloglucans. Releases the first two glycosyl segments from oligoxyloglucans. Active against cotton xyloglucan, tamarind xyloglucan and tamarind xyloglucan oligomers. The sequence is that of Probable oligoxyloglucan-reducing end-specific xyloglucanase (xgcA) from Neosartorya fischeri (strain ATCC 1020 / DSM 3700 / CBS 544.65 / FGSC A1164 / JCM 1740 / NRRL 181 / WB 181) (Aspergillus fischerianus).